Consider the following 256-residue polypeptide: DNA repair protein RecO (256 aa).

It belongs to the RecO family.

Involved in DNA repair and RecF pathway recombination. This Rhizobium leguminosarum bv. trifolii (strain WSM2304) protein is DNA repair protein RecO.